The sequence spans 165 residues: Phosphopantetheine adenylyltransferase (165 aa).

S10 lines the substrate pocket. ATP-binding positions include 10-11 (SF) and H18. 3 residues coordinate substrate: K42, S79, and R93. ATP contacts are provided by residues 94–96 (GLR), E104, and 129–135 (VRPITAT).

It belongs to the bacterial CoaD family. As to quaternary structure, homohexamer. Mg(2+) serves as cofactor.

It localises to the cytoplasm. The catalysed reaction is (R)-4'-phosphopantetheine + ATP + H(+) = 3'-dephospho-CoA + diphosphate. The protein operates within cofactor biosynthesis; coenzyme A biosynthesis; CoA from (R)-pantothenate: step 4/5. In terms of biological role, reversibly transfers an adenylyl group from ATP to 4'-phosphopantetheine, yielding dephospho-CoA (dPCoA) and pyrophosphate. This is Phosphopantetheine adenylyltransferase from Bradyrhizobium diazoefficiens (strain JCM 10833 / BCRC 13528 / IAM 13628 / NBRC 14792 / USDA 110).